Reading from the N-terminus, the 2009-residue chain is Sodium channel protein type 1 subunit alpha (2009 aa).

Residues 1–128 (MEQTVLVPPG…KIAIKILVHS (128 aa)) lie on the Cytoplasmic side of the membrane. The segment covering 28 to 48 (RIAEEKAKNPKPDKKDDDENG) has biased composition (basic and acidic residues). A disordered region spans residues 28-60 (RIAEEKAKNPKPDKKDDDENGPKPNSDLEAGKN). The I repeat unit spans residues 110–454 (ILTPFNPLRK…QQMIEQLKKQ (345 aa)). A helical membrane pass occupies residues 129–146 (LFSMLIMCTILTNCVFMT). Topologically, residues 147–152 (MSNPPD) are extracellular. A helical transmembrane segment spans residues 153 to 177 (WTKNVEYTFTGIYTFESLIKIIARG). Residues 178 to 188 (FCLEDFTFLRD) are Cytoplasmic-facing. A helical transmembrane segment spans residues 189-205 (PWNWLDFTVITFAYVTE). The Extracellular segment spans residues 206–213 (FVDLGNVS). The N-linked (GlcNAc...) asparagine glycan is linked to asparagine 211. The helical transmembrane segment at 214 to 235 (ALRTFRVLRALKTISVIPGLKT) threads the bilayer. Over 236-245 (IVGALIQSVK) the chain is Cytoplasmic. The chain crosses the membrane as a helical span at residues 246–269 (KLSDVMILTVFCLSVFALIGLQLF). Over 270-369 (MGNLRNKCIQ…YGYTSFDTFS (100 aa)) the chain is Extracellular. 2 disulfides stabilise this stretch: cysteine 277–cysteine 345 and cysteine 336–cysteine 351. N-linked (GlcNAc...) asparagine glycans are attached at residues asparagine 284, asparagine 295, asparagine 301, asparagine 306, and asparagine 338. Residues 370–384 (WAFLSLFRLMTQDFW) constitute an intramembrane region (pore-forming). Over 385-397 (ENLYQLTLRAAGK) the chain is Extracellular. The chain crosses the membrane as a helical span at residues 398 to 423 (TYMIFFVLVIFLGSFYLINLILAVVA). Topologically, residues 424-768 (MAYEEQNQAT…HVVNLVVMDP (345 aa)) are cytoplasmic. Positions 455–529 (QEAAQQAATA…FQKSESEDSI (75 aa)) are disordered. The span at 456–466 (EAAQQAATATA) shows a compositional bias: low complexity. Position 470 is a phosphoserine (serine 470). The segment covering 479 to 492 (LSDSSSEASKLSSK) has biased composition (low complexity). Basic residues predominate over residues 495 to 506 (KERRNRRKKRKQ). A compositionally biased stretch (basic and acidic residues) spans 520 to 529 (FQKSESEDSI). Serine 523, serine 525, serine 550, serine 551, serine 607, and serine 730 each carry phosphoserine. The tract at residues 584 to 627 (VGSENDFADDEHSTFEDNESRRDSLFVPRRHGERRNSNLSQTSR) is disordered. Basic and acidic residues predominate over residues 593-607 (DEHSTFEDNESRRDS). The stretch at 750–1022 (CSPYWLKVKH…QIAVDRMHKG (273 aa)) is one II repeat. The chain crosses the membrane as a helical span at residues 769 to 787 (FVDLAITICIVLNTLFMAM). Residues 788–797 (EHYPMTDHFN) lie on the Extracellular side of the membrane. Residues 798 to 820 (NVLTVGNLVFTGIFTAEMFLKII) traverse the membrane as a helical segment. Topologically, residues 821–830 (AMDPYYYFQE) are cytoplasmic. The chain crosses the membrane as a helical span at residues 831–849 (GWNIFDGFIVTLSLVELGL). Topologically, residues 850 to 854 (ANVEG) are extracellular. The chain crosses the membrane as a helical span at residues 855 to 874 (LSVLRSFRLLRVFKLAKSWP). The Cytoplasmic segment spans residues 875–891 (TLNMLIKIIGNSVGALG). Residues 892 to 912 (NLTLVLAIIVFIFAVVGMQLF) form a helical membrane-spanning segment. At 913–938 (GKSYKDCVCKIASDCQLPRWHMNDFF) the chain is on the extracellular side. The cysteines at positions 921 and 927 are disulfide-linked. Positions 939–952 (HSFLIVFRVLCGEW) form an intramembrane region, pore-forming. Over 953–965 (IETMWDCMEVAGQ) the chain is Extracellular. An intrachain disulfide couples cysteine 959 to cysteine 968. Residues 966-992 (AMCLTVFMMVMVIGNLVVLNLFLALLL) traverse the membrane as a helical segment. Over 993-1218 (SSFSADNLAA…RTCFRIVEHN (226 aa)) the chain is Cytoplasmic. A disordered region spans residues 1129-1163 (TEDFSSESDLEESKEKLNESSSSSEGSTVDIGAPV). The stretch at 1200 to 1514 (RGKQWWNLRR…KKYYNAMKKL (315 aa)) is one III repeat. Residues 1219-1237 (WFETFIVFMILLSSGALAF) traverse the membrane as a helical segment. Topologically, residues 1238 to 1250 (EDIYIDQRKTIKT) are extracellular. A helical membrane pass occupies residues 1251–1276 (MLEYADKVFTYIFILEMLLKWVAYGY). Residues 1277 to 1278 (QT) are Cytoplasmic-facing. The chain crosses the membrane as a helical span at residues 1279 to 1304 (YFTNAWCWLDFLIVDVSLVSLTANAL). The Extracellular segment spans residues 1305 to 1313 (GYSELGAIK). A helical membrane pass occupies residues 1314–1332 (SLRTLRALRPLRALSRFEG). The Cytoplasmic segment spans residues 1333–1345 (MRVVVNALLGAIP). A helical transmembrane segment spans residues 1346–1369 (SIMNVLLVCLIFWLIFSIMGVNLF). The Extracellular segment spans residues 1370-1415 (AGKFYHCINTTTGDRFDIEDVNNHTDCLKLIERNETARWKNVKVNF). A disulfide bridge connects residues cysteine 1376 and cysteine 1396. Asparagine 1378, asparagine 1392, and asparagine 1403 each carry an N-linked (GlcNAc...) asparagine glycan. Residues 1416 to 1433 (DNVGFGYLSLLQVATFKG) constitute an intramembrane region (pore-forming). Topologically, residues 1434–1457 (WMDIMYAAVDSRNVELQPKYEESL) are extracellular. The chain crosses the membrane as a helical span at residues 1458–1483 (YMYLYFVIFIIFGSFFTLNLFIGVII). Over 1484-1541 (DNFNQQKKKFGGQDIFMTEEQKKYYNAMKKLGSKKPQKPIPRPGNKFQGMVFDFVTRQ) the chain is Cytoplasmic. Phosphoserine; by PKC is present on serine 1516. An IV repeat occupies 1523-1821 (IPRPGNKFQG…WEKFDPDATQ (299 aa)). The chain crosses the membrane as a helical span at residues 1542–1560 (VFDISIMILICLNMVTMMV). Residues 1561–1571 (ETDDQSEYVTT) are Extracellular-facing. An S1-S2 loop of repeat IV region spans residues 1561–1571 (ETDDQSEYVTT). A helical membrane pass occupies residues 1572–1593 (ILSRINLVFIVLFTGECVLKLI). Residues 1594–1601 (SLRHYYFT) are Cytoplasmic-facing. A helical transmembrane segment spans residues 1602–1623 (IGWNIFDFVVVILSIVGMFLAE). The interval 1619–1636 (MFLAELIEKYFVSPTLFR) is S3b-S4 loop of repeat IV. The Extracellular portion of the chain corresponds to 1624 to 1636 (LIEKYFVSPTLFR). A helical transmembrane segment spans residues 1637-1655 (VIRLARIGRILRLIKGAKG). At 1656-1665 (IRTLLFALMM) the chain is on the cytoplasmic side. A helical transmembrane segment spans residues 1666–1688 (SLPALFNIGLLLFLVMFIYAIFG). The Extracellular segment spans residues 1689–1711 (MSNFAYVKREVGIDDMFNFETFG). Residues 1712–1726 (NSMICLFQITTSAGW) constitute an intramembrane region (pore-forming). Residues 1727–1759 (DGLLAPILNSKPPDCDPNKVNPGSSVKGDCGNP) lie on the Extracellular side of the membrane. Residues cysteine 1741 and cysteine 1756 are joined by a disulfide bond. A helical membrane pass occupies residues 1760 to 1788 (SVGIFFFVSYIIISFLVVVNMYIAVILEN). Residues 1789–2009 (FSVATEESAE…EGKDEKAKGK (221 aa)) are Cytoplasmic-facing. The 30-residue stretch at 1915-1944 (EEVSAVIIQRAYRRHLLKRTVKQASFTYNK) folds into the IQ domain. Residues 1986-2009 (YDRVTKPIVEKHEQEGKDEKAKGK) are disordered. Basic and acidic residues predominate over residues 1988 to 2009 (RVTKPIVEKHEQEGKDEKAKGK).

Belongs to the sodium channel (TC 1.A.1.10) family. Nav1.1/SCN1A subfamily. In terms of assembly, the Nav1.1 voltage-gated sodium channel consists of an ion-conducting alpha subunit SCN1A which is functional on its own regulated by one or more beta-1 (SCN1B), beta-2 (SCN2B), beta-3 (SCN3B) and beta-4 (SCN4B) subunits. SCN1B and SCN3B are non-covalently associated with SCN1A. SCN2B and SCN4B are disulfide-linked to SCN1A. SCN1B regulates both the expression at the plasma membrane and the voltage dependence of Nav1.1 inactivation. SCN3B and SCN4B reduce Nav1.1 conductance. Probably interacts with TMEM233; modulates the gating properties of NaV1.1. Interacts with FGF13; regulates the steady-state inactivation of Nav.1.1. In terms of processing, phosphorylation at Ser-1516 by PKC in a highly conserved cytoplasmic loop slows inactivation of the sodium channel and reduces peak sodium currents.

It is found in the cell membrane. It carries out the reaction Na(+)(in) = Na(+)(out). Its activity is regulated as follows. Activated by the spider toxins Hm1a and Hm1b (H.maculata, AC P60992 and AC P0DOC5) eliciting acute pain and mechanical allodynia. Inhibited by the conotoxin GVIIJ. Inhibited by the spider beta/delta-theraphotoxin-Pre1a. Its function is as follows. Pore-forming subunit of Nav1.1, a voltage-gated sodium (Nav) channel that directly mediates the depolarizing phase of action potentials in excitable membranes. Navs, also called VGSCs (voltage-gated sodium channels) or VDSCs (voltage-dependent sodium channels), operate by switching between closed and open conformations depending on the voltage difference across the membrane. In the open conformation they allow Na(+) ions to selectively pass through the pore, along their electrochemical gradient. The influx of Na(+) ions provokes membrane depolarization, initiating the propagation of electrical signals throughout cells and tissues. By regulating the excitability of neurons, ensures that they respond appropriately to synaptic inputs, maintaining the balance between excitation and inhibition in brain neural circuits. Nav1.1 plays a role in controlling the excitability and action potential propagation from somatosensory neurons, thereby contributing to the sensory perception of mechanically-induced pain. This Homo sapiens (Human) protein is Sodium channel protein type 1 subunit alpha.